A 145-amino-acid polypeptide reads, in one-letter code: Actin-depolymerizing factor 2 (145 aa).

The 133-residue stretch at 13-145 (GMGVAPDIRD…DLEVLRERAH (133 aa)) folds into the ADF-H domain.

Belongs to the actin-binding proteins ADF family.

Functionally, actin-depolymerizing protein. Severs actin filaments (F-actin) and binds to actin monomers. This Oryza sativa subsp. japonica (Rice) protein is Actin-depolymerizing factor 2 (ADF2).